The sequence spans 394 residues: Olfactomedin-like protein 3B (394 aa).

The N-terminal stretch at methionine 1 to serine 18 is a signal peptide. The stretch at leucine 29–aspartate 94 forms a coiled coil. Positions valine 132 to lysine 383 constitute an Olfactomedin-like domain. Cysteine 133 and cysteine 310 are disulfide-bonded. 3 N-linked (GlcNAc...) asparagine glycosylation sites follow: asparagine 169, asparagine 204, and asparagine 233.

Belongs to the OLFML3 family.

It is found in the secreted. In terms of biological role, secreted scaffold protein that plays an essential role in dorsoventral patterning during early development. Stabilizes axial formation by restricting chordin (CHRD) activity on the dorsal side. Acts by facilitating the association between the tolloid proteases and their substrate chordin (CHRD), leading to enhance chordin (CHRD) degradation. In Danio rerio (Zebrafish), this protein is Olfactomedin-like protein 3B (olfml3b).